A 388-amino-acid polypeptide reads, in one-letter code: Cystathionine gamma-synthase (388 aa).

Lysine 208 is modified (N6-(pyridoxal phosphate)lysine).

Belongs to the trans-sulfuration enzymes family. Homotetramer. The cofactor is pyridoxal 5'-phosphate.

The protein localises to the cytoplasm. It catalyses the reaction O-succinyl-L-homoserine + L-cysteine = L,L-cystathionine + succinate + H(+). Functionally, catalyzes the formation of L-cystathionine from O-succinyl-L-homoserine (OSHS) and L-cysteine, via a gamma-replacement reaction. In the absence of thiol, catalyzes gamma-elimination to form 2-oxobutanoate, succinate and ammonia. The protein is Cystathionine gamma-synthase (metB) of Mycobacterium leprae (strain TN).